The primary structure comprises 69 residues: Intrepicalcin (69 aa).

The first 27 residues, 1–27 (MRQNTMTIIFIVFIVTFASLTIYGAEA), serve as a signal peptide directing secretion. The propeptide occupies 28–36 (SEANFLERR). 3 cysteine pairs are disulfide-bonded: Cys-39–Cys-53, Cys-46–Cys-57, and Cys-52–Cys-68. The essential for stimulation of [3H]ryanodine binding to RYR1 stretch occupies residues 59 to 60 (RR).

The protein belongs to the scorpion calcin family. In terms of tissue distribution, expressed by the venom gland.

It localises to the secreted. Its function is as follows. This toxin stabilizes ryanodine receptor 1 (RyR1) opening in a long-lasting subconductance state (55% of the full conductance state). Furthermore, it triggers calcium release from sarcoplasmic vesicles (45.3 nM are enough to induce a sharp release, and 50% of the total calcium is released after toxin (100 nM) addition) probably by acting as a cell-penetrating peptide (CPP). In addition, it has been shown to dose-dependently stimulate ryanodine binding to RyR1 (EC(50)=17.4 nM). It also augments the bell-shaped calcium-[3H]ryanodine binding curve that is maximal at about 10 uM calcium concentration. It binds a different site as ryanodine. It acts synergistically with caffeine. In vivo, intracerebroventricular injection into mice induces neurotoxic symptoms, followed by death. The polypeptide is Intrepicalcin (Thorellius intrepidus (Scorpion)).